The following is a 743-amino-acid chain: Catalase-peroxidase (743 aa).

The span at 1-15 shows a compositional bias: polar residues; sequence MSSDSRPPQPDTSTQ. The segment at 1–40 is disordered; sequence MSSDSRPPQPDTSTQSNSESESPAISSPTPQDHAPMTNRD. Over residues 16-28 the composition is skewed to low complexity; the sequence is SNSESESPAISSP. The segment at residues 110-233 is a cross-link (tryptophyl-tyrosyl-methioninium (Trp-Tyr) (with M-259)); that stretch reads WHAAGTYRIQ…YGATTMGLIY (124 aa). The Proton acceptor role is filled by histidine 111. Residues 233-259 constitute a cross-link (tryptophyl-tyrosyl-methioninium (Tyr-Met) (with W-110)); that stretch reads YVNPEGPEGKPDPVAAAHDIRETFARM. Histidine 274 is a binding site for heme b. Residues 490 to 511 form a disordered region; that stretch reads DKRGGANGGRLRLEPQKSWESN.

It belongs to the peroxidase family. Peroxidase/catalase subfamily. Homodimer or homotetramer. Requires heme b as cofactor. Formation of the three residue Trp-Tyr-Met cross-link is important for the catalase, but not the peroxidase activity of the enzyme.

The enzyme catalyses H2O2 + AH2 = A + 2 H2O. It carries out the reaction 2 H2O2 = O2 + 2 H2O. Bifunctional enzyme with both catalase and broad-spectrum peroxidase activity. This chain is Catalase-peroxidase, found in Mycobacterium marinum (strain ATCC BAA-535 / M).